A 157-amino-acid chain; its full sequence is 3-hydroxyacyl-[acyl-carrier-protein] dehydratase FabZ (157 aa).

H58 is a catalytic residue.

This sequence belongs to the thioester dehydratase family. FabZ subfamily.

It is found in the cytoplasm. The catalysed reaction is a (3R)-hydroxyacyl-[ACP] = a (2E)-enoyl-[ACP] + H2O. In terms of biological role, involved in unsaturated fatty acids biosynthesis. Catalyzes the dehydration of short chain beta-hydroxyacyl-ACPs and long chain saturated and unsaturated beta-hydroxyacyl-ACPs. The chain is 3-hydroxyacyl-[acyl-carrier-protein] dehydratase FabZ from Rhizobium rhizogenes (strain K84 / ATCC BAA-868) (Agrobacterium radiobacter).